The primary structure comprises 176 residues: NAD(P)H-quinone oxidoreductase subunit 6, chloroplastic (176 aa).

The next 5 helical transmembrane spans lie at 10 to 30, 32 to 52, 61 to 81, 93 to 115, and 152 to 172; these read FLLVFLGSGLILGGLGVVLLT, PIYSAFSLGLVFVCISLFYIP, AQLLIYVGAINVLIIFAVMFM, WTVGDGVTSVVCTSIFASLITTI, and FFLPFELISIILLVALIGAIA.

This sequence belongs to the complex I subunit 6 family. As to quaternary structure, NDH is composed of at least 16 different subunits, 5 of which are encoded in the nucleus.

It localises to the plastid. It is found in the chloroplast thylakoid membrane. The catalysed reaction is a plastoquinone + NADH + (n+1) H(+)(in) = a plastoquinol + NAD(+) + n H(+)(out). The enzyme catalyses a plastoquinone + NADPH + (n+1) H(+)(in) = a plastoquinol + NADP(+) + n H(+)(out). Its function is as follows. NDH shuttles electrons from NAD(P)H:plastoquinone, via FMN and iron-sulfur (Fe-S) centers, to quinones in the photosynthetic chain and possibly in a chloroplast respiratory chain. The immediate electron acceptor for the enzyme in this species is believed to be plastoquinone. Couples the redox reaction to proton translocation, and thus conserves the redox energy in a proton gradient. The chain is NAD(P)H-quinone oxidoreductase subunit 6, chloroplastic (ndhG) from Vitis vinifera (Grape).